The sequence spans 33 residues: Photosystem II reaction center protein Psb30 (33 aa).

Residues 5–25 form a helical membrane-spanning segment; sequence LIVQLTSLALITLAGPLIVAL.

This sequence belongs to the Psb30/Ycf12 family. PSII is composed of 1 copy each of membrane proteins PsbA, PsbB, PsbC, PsbD, PsbE, PsbF, PsbH, PsbI, PsbJ, PsbK, PsbL, PsbM, PsbT, PsbY, PsbZ, Psb30/Ycf12, peripheral proteins of the oxygen-evolving complex and a large number of cofactors. It forms dimeric complexes.

The protein localises to the plastid. It is found in the chloroplast thylakoid membrane. In terms of biological role, a core subunit of photosystem II (PSII), probably helps stabilize the reaction center. In Euglena sanguinea, this protein is Photosystem II reaction center protein Psb30.